The primary structure comprises 200 residues: Recombination protein RecR (200 aa).

The C4-type zinc finger occupies 57–72; sequence CRQCRTLTEDDLCPQC. One can recognise a Toprim domain in the interval 80–175; it reads TLLCVVEGPM…IASRIAHGVP (96 aa).

This sequence belongs to the RecR family.

Functionally, may play a role in DNA repair. It seems to be involved in an RecBC-independent recombinational process of DNA repair. It may act with RecF and RecO. This Pseudomonas fluorescens (strain Pf0-1) protein is Recombination protein RecR.